The primary structure comprises 176 residues: NAD(P)H-quinone oxidoreductase subunit 6, chloroplastic (176 aa).

5 helical membrane-spanning segments follow: residues 10–30 (FLLVFLGSGLIVGGLGVVLLP), 33–53 (IFSAFSLGFVLVCISLLYILA), 61–81 (AQLLIYVGAINVLIIFAVMFM), 92–112 (LWTVGDGITSLVCTTLLFSLI), and 152–172 (FFLPFELISIILLVALIGAIS).

The protein belongs to the complex I subunit 6 family. NDH is composed of at least 16 different subunits, 5 of which are encoded in the nucleus.

It localises to the plastid. It is found in the chloroplast thylakoid membrane. The enzyme catalyses a plastoquinone + NADH + (n+1) H(+)(in) = a plastoquinol + NAD(+) + n H(+)(out). The catalysed reaction is a plastoquinone + NADPH + (n+1) H(+)(in) = a plastoquinol + NADP(+) + n H(+)(out). Its function is as follows. NDH shuttles electrons from NAD(P)H:plastoquinone, via FMN and iron-sulfur (Fe-S) centers, to quinones in the photosynthetic chain and possibly in a chloroplast respiratory chain. The immediate electron acceptor for the enzyme in this species is believed to be plastoquinone. Couples the redox reaction to proton translocation, and thus conserves the redox energy in a proton gradient. This Arabis hirsuta (Hairy rock-cress) protein is NAD(P)H-quinone oxidoreductase subunit 6, chloroplastic (ndhG).